A 225-amino-acid chain; its full sequence is MNPVYSPGSSGVPYANAKGIGYPAGFPMGYAAAAPAYSPNMYAGPNPAFQQELEHPAHVSSGVQMFMFGHAFSVARNGAIPSGYTPGTPYKVSCSPTSGTVPPYSSSPNPYQTAVYPVRSAYPQQNPYAQQGAYYTQPFYAAPPHVIHHTTVVQPNGMPATMYPAPIQSPRGNGVAMGMVAGTTMAMSAGTLLTSHYPSPVAPQVTMPTYRPPGTPTYSYVPPQW.

Topologically, residues 1–58 are cytoplasmic; it reads MNPVYSPGSSGVPYANAKGIGYPAGFPMGYAAAAPAYSPNMYAGPNPAFQQELEHPAH. The chain crosses the membrane as a helical span at residues 59–75; sequence VSSGVQMFMFGHAFSVA. At 76–173 the chain is on the extracellular side; that stretch reads RNGAIPSGYT…PAPIQSPRGN (98 aa). Residues 174-193 form a helical membrane-spanning segment; the sequence is GVAMGMVAGTTMAMSAGTLL. The Cytoplasmic portion of the chain corresponds to 194–225; it reads TSHYPSPVAPQVTMPTYRPPGTPTYSYVPPQW.

It belongs to the FAM168 family.

It is found in the cytoplasm. Its subcellular location is the perinuclear region. The protein resides in the cell membrane. The protein localises to the cell projection. It localises to the axon. Its function is as follows. Inhibitor of neuronal axonal outgrowth. The sequence is that of Myelin-associated neurite-outgrowth inhibitor (fam168b) from Xenopus laevis (African clawed frog).